We begin with the raw amino-acid sequence, 309 residues long: MDKPAKRIVMIVGPTAVGKSDLGVYLAQQLHGEVINGDAYQIYRHMDIGTAKITPKEMQGVPHHLLDIADPTVAYSVAKFKKAATAMIDTVADRQQLPILVGGTGFYLNSLRLNLPLGGKAPPTAIRQRWQVALATNGQSWLWQQLAQRDPDAAQQIAPANTRRVIRALEVGELTGRRFSDQPQPAPLFSTLVIGLTTDRAVLYDRINARVDAMMQAGLLAEVEQLLKTVPADAQAMQAIGYKELVPYLHGQAELADCVALIKQHSRHFAKRQLTYFRNQMPTHWFDLVAHPEDKNAIVTLVQQWLKQR.

Position 13 to 20 (13 to 20) interacts with ATP; that stretch reads GPTAVGKS. 15–20 is a substrate binding site; it reads TAVGKS.

It belongs to the IPP transferase family. As to quaternary structure, monomer. Mg(2+) serves as cofactor.

The catalysed reaction is adenosine(37) in tRNA + dimethylallyl diphosphate = N(6)-dimethylallyladenosine(37) in tRNA + diphosphate. Its function is as follows. Catalyzes the transfer of a dimethylallyl group onto the adenine at position 37 in tRNAs that read codons beginning with uridine, leading to the formation of N6-(dimethylallyl)adenosine (i(6)A). The sequence is that of tRNA dimethylallyltransferase from Lacticaseibacillus casei (strain BL23) (Lactobacillus casei).